Consider the following 553-residue polypeptide: Cytokine-like nuclear factor N-PAC (553 aa).

Residues 8–66 (LGDLVWGKLGRYPPWPGKIVNPPKDLKKPRGKKCFFVKFFGTEDHAWIKVEQLKPYHAH) form the PWWP domain. Composition is skewed to basic and acidic residues over residues 92–145 (RAKG…EGKK) and 162–182 (RAQE…KDLT). Positions 92–188 (RAKGKDQTSS…KDLTIPESST (97 aa)) are disordered. Position 130 is a phosphoserine (Ser130). Lys135 participates in a covalent cross-link: Glycyl lysine isopeptide (Lys-Gly) (interchain with G-Cter in SUMO2). Ser167 is modified (phosphoserine). The a.T hook DNA-binding region spans 168-180 (PRKRGRPPKDEKD). Glycyl lysine isopeptide (Lys-Gly) (interchain with G-Cter in SUMO2) cross-links involve residues Lys176, Lys179, Lys201, and Lys211. Positions 214–217 (DPHF) are interaction with histone H3. Positions 216–225 (HFHHFLLSQT) are interaction with KDM1B. Glycyl lysine isopeptide (Lys-Gly) (interchain with G-Cter in SUMO2) cross-links involve residues Lys227, Lys237, Lys240, and Lys269. Residues 261–553 (GSITPTDKKI…MSAVYRAYIH (293 aa)) are dehydrogenase domain. 271–285 (GFLGLGLMGSGIVSN) lines the NAD(+) pocket. A Glycyl lysine isopeptide (Lys-Gly) (interchain with G-Cter in SUMO2) cross-link involves residue Lys302. The NAD(+) site is built by Thr362 and Lys505. A Phosphoserine modification is found at Ser540.

This sequence belongs to the HIBADH-related family. NP60 subfamily. Homotetramere. Interacts with MAPK14. Interacts with KDM1B at nucleosomes; this interaction stimulates H3K4me1 and H3K4me2 demethylation. Binds to mononucleosomes. Interacts with GATA4; the interaction is required for a synergistic activation of GATA4 target genes transcription.

The protein localises to the nucleus. Its subcellular location is the chromosome. Functionally, cytokine-like nuclear factor with chromatin gene reader activity involved in chromatin modification and regulation of gene expression. Acts as a nucleosome-destabilizing factor that is recruited to genes during transcriptional activation. Recognizes and binds histone H3 without a preference for specific epigenetic markers and also binds DNA. Interacts with KDM1B and promotes its histone demethylase activity by facilitating the capture of H3 tails, they form a multifunctional enzyme complex that modifies transcribed chromatin and facilitates Pol II transcription through nucleosomes. Stimulates the acetylation of 'Lys-56' of nucleosomal histone H3 (H3K56ac) by EP300. With GATA4, co-binds a defined set of heart development genes and coregulates their expression during cardiomyocyte differentiation. Regulates p38 MAP kinase activity by mediating stress activation of MAPK14/p38alpha and specifically regulating MAPK14 signaling. Indirectly promotes phosphorylation of MAPK14 and activation of ATF2. The phosphorylation of MAPK14 requires upstream activity of MAP2K4 and MAP2K6. The polypeptide is Cytokine-like nuclear factor N-PAC (Homo sapiens (Human)).